A 179-amino-acid polypeptide reads, in one-letter code: MSLKKRYRETIQPKLQKDLSLTNIHEVPKVLKVTVNRGLGEAAANAKSLEASVNELAQITGQKVVVTRAKKAIAGFKIRQGMPIGCAVTLRGDRMYAFLERLINLALPRIRDFRGVSPKSFDGRGNYTLGVREQIIFPEISFDKIDAIRGMDITIVTTARSDEEGRALLREMGMPFQSN.

Belongs to the universal ribosomal protein uL5 family. As to quaternary structure, part of the 50S ribosomal subunit; part of the 5S rRNA/L5/L18/L25 subcomplex. Contacts the 5S rRNA and the P site tRNA. Forms a bridge to the 30S subunit in the 70S ribosome.

Functionally, this is one of the proteins that bind and probably mediate the attachment of the 5S RNA into the large ribosomal subunit, where it forms part of the central protuberance. In the 70S ribosome it contacts protein S13 of the 30S subunit (bridge B1b), connecting the 2 subunits; this bridge is implicated in subunit movement. Contacts the P site tRNA; the 5S rRNA and some of its associated proteins might help stabilize positioning of ribosome-bound tRNAs. The sequence is that of Large ribosomal subunit protein uL5 from Synechococcus sp. (strain CC9605).